Here is a 327-residue protein sequence, read N- to C-terminus: MNSKSRITAIGTHVPNQILSNNDLEKMIDTNDEWIVQRTGMKERRIASEDEYSSNLAIKAVENLCTTYKKNLEDVDCIIVATTTADYVFPSVACQIQQYFNIPHTMAFDLNATCAGFTYGLHVGNSLITSGSHKKVLVVATETLSKVTDYTDRTTCILFGDGAGAILLERDENKPSFIAYHMGTNGHGGIHLYRTNLSTTMNDTPLQTNEKIVQNGREVYKWATRTVPVGIKELLHTANMKMDDIDWFIPHSANLRMIESICEKSQIPIHKTLTSVEYMGNTSSVSIPLALDLARKKGKLNNGDTLLLYGFGGGLTHLGLIVEWDLS.

Catalysis depends on residues Cys-114 and His-251. The ACP-binding stretch occupies residues 252 to 256; it reads SANLR. The active site involves Asn-281.

This sequence belongs to the thiolase-like superfamily. FabH family. In terms of assembly, homodimer.

It is found in the cytoplasm. The enzyme catalyses malonyl-[ACP] + acetyl-CoA + H(+) = 3-oxobutanoyl-[ACP] + CO2 + CoA. It participates in lipid metabolism; fatty acid biosynthesis. Functionally, catalyzes the condensation reaction of fatty acid synthesis by the addition to an acyl acceptor of two carbons from malonyl-ACP. Catalyzes the first condensation reaction which initiates fatty acid synthesis and may therefore play a role in governing the total rate of fatty acid production. Possesses both acetoacetyl-ACP synthase and acetyl transacylase activities. Its substrate specificity determines the biosynthesis of branched-chain and/or straight-chain of fatty acids. The sequence is that of Beta-ketoacyl-[acyl-carrier-protein] synthase III 2 from Bacillus anthracis.